The following is a 330-amino-acid chain: Tryptophan--tRNA ligase (330 aa).

ATP contacts are provided by residues 10-12 (QPS) and 18-19 (GN). Positions 11–19 (PSGSVTLGN) match the 'HIGH' region motif. Asp-133 contributes to the L-tryptophan binding site. ATP is bound by residues 145-147 (GED), Ile-184, and 193-197 (KMSKS). The 'KMSKS' region signature appears at 193-197 (KMSKS).

The protein belongs to the class-I aminoacyl-tRNA synthetase family. Homodimer.

The protein localises to the cytoplasm. It catalyses the reaction tRNA(Trp) + L-tryptophan + ATP = L-tryptophyl-tRNA(Trp) + AMP + diphosphate + H(+). Functionally, catalyzes the attachment of tryptophan to tRNA(Trp). The chain is Tryptophan--tRNA ligase from Bacillus subtilis (strain 168).